A 708-amino-acid polypeptide reads, in one-letter code: UvrABC system protein B (708 aa).

In terms of domain architecture, Helicase ATP-binding spans 32 to 419 (EGIQSGKTAQ…GGEVVEQIIR (388 aa)). Position 45–52 (45–52 (GATGTGKT)) interacts with ATP. Residues 98-121 (YYDYYQPEAYIPQRDVYIEKDSSI) carry the Beta-hairpin motif. In terms of domain architecture, Helicase C-terminal spans 436–598 (QVTHLLEQVR…IVPKTVRKSI (163 aa)). The UVR domain occupies 627–662 (IEYVDKLEQEMLAAAEDLEFERAARLRDRVLQLKEH). The disordered stretch occupies residues 668 to 708 (SEVEIVDEKSAGKSGGRGRGRRGAKKKGASKGTKIPRPKRG). Over residues 683–708 (GRGRGRRGAKKKGASKGTKIPRPKRG) the composition is skewed to basic residues.

This sequence belongs to the UvrB family. Forms a heterotetramer with UvrA during the search for lesions. Interacts with UvrC in an incision complex.

Its subcellular location is the cytoplasm. Functionally, the UvrABC repair system catalyzes the recognition and processing of DNA lesions. A damage recognition complex composed of 2 UvrA and 2 UvrB subunits scans DNA for abnormalities. Upon binding of the UvrA(2)B(2) complex to a putative damaged site, the DNA wraps around one UvrB monomer. DNA wrap is dependent on ATP binding by UvrB and probably causes local melting of the DNA helix, facilitating insertion of UvrB beta-hairpin between the DNA strands. Then UvrB probes one DNA strand for the presence of a lesion. If a lesion is found the UvrA subunits dissociate and the UvrB-DNA preincision complex is formed. This complex is subsequently bound by UvrC and the second UvrB is released. If no lesion is found, the DNA wraps around the other UvrB subunit that will check the other stand for damage. The protein is UvrABC system protein B of Rhodopirellula baltica (strain DSM 10527 / NCIMB 13988 / SH1).